Reading from the N-terminus, the 735-residue chain is DNA replication licensing factor mcm5-B (735 aa).

The 207-residue stretch at 332–538 (IYETVAKSIA…RDMTLAKHVM (207 aa)) folds into the MCM domain. Arginine 372 provides a ligand contact to ADP. The Arginine finger signature appears at 513–516 (SRFD).

This sequence belongs to the MCM family. In terms of assembly, component of the mcm2-7 complex (RLF-M). The complex forms a toroidal hexameric ring with the proposed subunit order mcm2-mcm6-mcm4-mcm7-mcm3-mcm5. The heterodimer of mmcm3/mcm5 interacts with mcm4, mmcm6, mcm7 and weakly with mcm2. Component of the CMG helicase complex, composed of the mcm2-7 complex, the GINS complex and cdc45.

It localises to the nucleus. Its subcellular location is the chromosome. The catalysed reaction is ATP + H2O = ADP + phosphate + H(+). In terms of biological role, acts as a component of the MCM2-7 complex (MCM complex) which is the replicative helicase essential for 'once per cell cycle' DNA replication initiation and elongation in eukaryotic cells. Core component of CDC45-MCM-GINS (CMG) helicase, the molecular machine that unwinds template DNA during replication, and around which the replisome is built. The active ATPase sites in the MCM2-7 ring are formed through the interaction surfaces of two neighboring subunits such that a critical structure of a conserved arginine finger motif is provided in trans relative to the ATP-binding site of the Walker A box of the adjacent subunit. The six ATPase active sites, however, are likely to contribute differentially to the complex helicase activity. The chain is DNA replication licensing factor mcm5-B (mcm5-b) from Xenopus laevis (African clawed frog).